Here is a 473-residue protein sequence, read N- to C-terminus: L-seryl-tRNA(Sec) selenium transferase (473 aa).

K302 is subject to N6-(pyridoxal phosphate)lysine.

This sequence belongs to the SelA family. Pyridoxal 5'-phosphate is required as a cofactor.

The protein localises to the cytoplasm. It catalyses the reaction L-seryl-tRNA(Sec) + selenophosphate + H(+) = L-selenocysteinyl-tRNA(Sec) + phosphate. It functions in the pathway aminoacyl-tRNA biosynthesis; selenocysteinyl-tRNA(Sec) biosynthesis; selenocysteinyl-tRNA(Sec) from L-seryl-tRNA(Sec) (bacterial route): step 1/1. Functionally, converts seryl-tRNA(Sec) to selenocysteinyl-tRNA(Sec) required for selenoprotein biosynthesis. In Shewanella oneidensis (strain ATCC 700550 / JCM 31522 / CIP 106686 / LMG 19005 / NCIMB 14063 / MR-1), this protein is L-seryl-tRNA(Sec) selenium transferase.